The primary structure comprises 555 residues: Branched-chain-amino-acid aminotransferase-like protein 1 (555 aa).

It belongs to the class-IV pyridoxal-phosphate-dependent aminotransferase family.

This chain is Branched-chain-amino-acid aminotransferase-like protein 1, found in Arabidopsis thaliana (Mouse-ear cress).